The chain runs to 842 residues: MDAPGGGGGGGGGGGGVDAGEPVWDWGNLLDFAVHDDDSLVLPWGDDSIGIEADPAEAALLPPAPSPQPAEAEAEAAGPASLPSSMQAEGSKRRVRKRDPRLVCPNYLAGRVPCACPEIDEMAAALEVEDVATELLAGARKKPKGAGRGSGAAVGGSGGGASRGTPAEMKCQVPGCEADIRELKGYHRRHRVCLRCAHAAAVMLDGVQKRYCQQCGKFHILLDFDEDKRSCRRKLERHNKRRRRKPDSKGILEKDIDDQLDFSADGSGDGELREENIDVTTSETLETVLSNKVLDRETPVGSDDVLSSPTCAQPSLQIDQSKSLVTFAASVEACLGTKQENTKLTNSPVHDTKSTYSSSCPTGRVSFKLYDWNPAEFPRRLRHQIFEWLSSMPVELEGYIRPGCTILTVFVAMPQHMWDKLSEDTGNLVKSLVNAPNSLLLGKGAFFIHVNNMIFQVLKDGATLTSTRLEVQSPRIHYVHPSWFEAGKPIDLILCGSSLDQPKFRSLVSFDGLYLKHDCRRILSHETFDCIGSGEHILDSQHEIFRINITTSKLDTHGPAFVEVENMFGLSNFVPILVGSKHLCSELEQIHDALCGSSDISSDPCELRGLRQTAMLGFLIDIGWLIRKPSIDEFQNLLSLANIQRWICMMKFLIQNDFINVLEIIVNSLDNIIGSELLSNLEKGRLENHVTEFLGYVSEARNIVDNRPKYDKQRQVDTRWAGDYAPNQPKLGISVPLAESTGTSGEHDLHSTNAASGEEENMPLVTKALPHRQCCHPETSARWLNAASIGAFPGGAMRMRLATTVVIGAVVCFAACVVLFHPHRVGVLAAPVKRYLSRNYSS.

Positions 1-18 are enriched in gly residues; sequence MDAPGGGGGGGGGGGGVD. Disordered regions lie at residues 1 to 22, 59 to 97, and 140 to 168; these read MDAP…AGEP, ALLP…RVRK, and RKKP…TPAE. Over residues 69–85 the composition is skewed to low complexity; it reads PAEAEAEAAGPASLPSS. The span at 146–162 shows a compositional bias: gly residues; sequence AGRGSGAAVGGSGGGAS. The segment at 168-245 adopts an SBP-type; atypical zinc-finger fold; that stretch reads EMKCQVPGCE…ERHNKRRRRK (78 aa). Zn(2+)-binding residues include Cys-171, Cys-176, Cys-193, Cys-196, Cys-212, Cys-215, His-219, and Cys-231. The short motif at 228 to 244 is the Bipartite nuclear localization signal element; it reads KRSCRRKLERHNKRRRR. Residues 236–246 are compositionally biased toward basic residues; sequence ERHNKRRRRKP. A disordered region spans residues 236 to 256; that stretch reads ERHNKRRRRKPDSKGILEKDI.

Ubiquitous.

It localises to the nucleus. Its function is as follows. Trans-acting factor that binds specifically to the consensus nucleotide sequence 5'-TNCGTACAA-3'. This chain is Squamosa promoter-binding-like protein 9 (SPL9), found in Oryza sativa subsp. japonica (Rice).